A 207-amino-acid chain; its full sequence is Neuroendocrine protein 7B2 (207 aa).

An N-terminal signal peptide occupies residues 1 to 22 (MVSTMLSGLVLWLTFGWTPALA). A disulfide bond links C116 and C125. A phosphoserine mark is found at S136 and S200. The tract at residues 168–207 (KGGQRRKRRSVNPYLQGQRLDNVVAKKSVPHFSDEDKDPE) is disordered.

This sequence belongs to the 7B2 family. Interacts with PCSK2/PC2 early in the secretory pathway. Dissociation occurs at later stages. Post-translationally, proteolytically cleaved in the Golgi by a furin-like convertase to generate bioactive peptides. In terms of processing, sulfated on tyrosine residues.

It is found in the secreted. In terms of biological role, acts as a molecular chaperone for PCSK2/PC2, preventing its premature activation in the regulated secretory pathway. Binds to inactive PCSK2 in the endoplasmic reticulum and facilitates its transport from there to later compartments of the secretory pathway where it is proteolytically matured and activated. Also required for cleavage of PCSK2 but does not appear to be involved in its folding. Plays a role in regulating pituitary hormone secretion. The C-terminal peptide inhibits PCSK2 in vitro. The protein is Neuroendocrine protein 7B2 (SCG5) of Sus scrofa (Pig).